The sequence spans 54 residues: Preprotein translocase subunit SecG (54 aa).

The Cytoplasmic segment spans residues 1-31; it reads MSSGQNSGGLMSSAGLVRYFDAEDRNSIRID. The helical transmembrane segment at 32–53 threads the bilayer; it reads PKTIVAFGVLFGVGVLVLNALA. Position 54 (I54) is a topological domain, extracellular.

Belongs to the SEC61-beta family. Component of the protein translocase complex. Heterotrimer consisting of alpha (SecY), beta (SecG) and gamma (SecE) subunits. Can form oligomers of the heterotrimer.

Its subcellular location is the cell membrane. Functionally, involved in protein export. The function of the beta subunit is unknown, but it may be involved in stabilization of the trimeric complex. The protein is Preprotein translocase subunit SecG of Haloquadratum walsbyi (strain DSM 16790 / HBSQ001).